Reading from the N-terminus, the 507-residue chain is ATP synthase subunit alpha, chloroplastic (507 aa).

170-177 (GDRQTGKT) is an ATP binding site.

Belongs to the ATPase alpha/beta chains family. F-type ATPases have 2 components, CF(1) - the catalytic core - and CF(0) - the membrane proton channel. CF(1) has five subunits: alpha(3), beta(3), gamma(1), delta(1), epsilon(1). CF(0) has four main subunits: a, b, b' and c.

The protein resides in the plastid. It is found in the chloroplast thylakoid membrane. It catalyses the reaction ATP + H2O + 4 H(+)(in) = ADP + phosphate + 5 H(+)(out). Functionally, produces ATP from ADP in the presence of a proton gradient across the membrane. The alpha chain is a regulatory subunit. The polypeptide is ATP synthase subunit alpha, chloroplastic (Acorus calamus var. americanus (American sweet flag)).